Reading from the N-terminus, the 52-residue chain is Large ribosomal subunit protein bL32c (52 aa).

It belongs to the bacterial ribosomal protein bL32 family.

Its subcellular location is the plastid. The protein resides in the chloroplast. This chain is Large ribosomal subunit protein bL32c, found in Capsella bursa-pastoris (Shepherd's purse).